We begin with the raw amino-acid sequence, 381 residues long: Cytochrome b (381 aa).

The next 4 membrane-spanning stretches (helical) occupy residues 34–54 (FGSL…FLAM), 78–99 (WLMR…YLHI), 114–134 (WNIG…GYVL), and 179–199 (FFAF…IHIL). Positions 84 and 98 each coordinate heme b. Heme b contacts are provided by His183 and His197. His202 serves as a coordination point for a ubiquinone. The next 4 helical transmembrane spans lie at 227-247 (YKDL…ALFM), 289-309 (LGGV…PLLH), 321-341 (LTQI…WIGG), and 348-368 (FIMV…FVIP).

The protein belongs to the cytochrome b family. As to quaternary structure, the cytochrome bc1 complex contains 3 respiratory subunits (MT-CYB, CYC1 and UQCRFS1), 2 core proteins (UQCRC1 and UQCRC2) and probably 6 low-molecular weight proteins. Heme b serves as cofactor.

Its subcellular location is the mitochondrion inner membrane. Functionally, component of the ubiquinol-cytochrome c reductase complex (complex III or cytochrome b-c1 complex) that is part of the mitochondrial respiratory chain. The b-c1 complex mediates electron transfer from ubiquinol to cytochrome c. Contributes to the generation of a proton gradient across the mitochondrial membrane that is then used for ATP synthesis. The chain is Cytochrome b (mt-cyb) from Scyliorhinus canicula (Small-spotted catshark).